The sequence spans 286 residues: NADPH-dependent 7-cyano-7-deazaguanine reductase (286 aa).

A substrate-binding site is contributed by 88–90; it reads VES. 90–91 contacts NADPH; it reads SK. Catalysis depends on cysteine 194, which acts as the Thioimide intermediate. The active-site Proton donor is the aspartate 201. 233–234 contributes to the substrate binding site; the sequence is HE. Residue 262 to 263 participates in NADPH binding; that stretch reads RG.

The protein belongs to the GTP cyclohydrolase I family. QueF type 2 subfamily. In terms of assembly, homodimer.

The protein localises to the cytoplasm. It catalyses the reaction 7-aminomethyl-7-carbaguanine + 2 NADP(+) = 7-cyano-7-deazaguanine + 2 NADPH + 3 H(+). Its pathway is tRNA modification; tRNA-queuosine biosynthesis. Catalyzes the NADPH-dependent reduction of 7-cyano-7-deazaguanine (preQ0) to 7-aminomethyl-7-deazaguanine (preQ1). This chain is NADPH-dependent 7-cyano-7-deazaguanine reductase, found in Colwellia psychrerythraea (strain 34H / ATCC BAA-681) (Vibrio psychroerythus).